Here is a 714-residue protein sequence, read N- to C-terminus: A-kinase anchor protein 5 (714 aa).

2 disordered regions span residues 1-146 (METS…GYVR) and 243-333 (VLEN…VGHT). Residues 1–164 (METSVSEIQI…EIKAQIQPDE (164 aa)) form an essential to the intracellular anchoring function region. Residues Ser-4 and Ser-22 each carry the phosphoserine modification. The span at 10 to 32 (IETKDEKRPEAASPQKERQERKT) shows a compositional bias: basic and acidic residues. Residue Cys-36 is the site of S-palmitoyl cysteine attachment. The span at 37–50 (FKRRKKVNKKKAKA) shows a compositional bias: basic residues. Composition is skewed to basic and acidic residues over residues 54–63 (TAEETEKHAP) and 88–100 (KPSE…KPSE). Residues 74-94 (AGAWASIKRLVTHRKPSESAE) carry the AKAP CaM-binding motif. Cys-123 carries the S-palmitoyl cysteine lipid modification. Polar residues predominate over residues 243-268 (VLENSAADSPQPVTSTAPLSPATTHQ). Over residues 285–301 (GKDDGRRKTAAEEKKSG) the composition is skewed to basic and acidic residues. The 1; approximate repeat unit spans residues 305 to 312 (LGQAEEAS). A 28 X 8 AA repeats of V-G-Q-A-E-E-A-T region spans residues 305–597 (LGQAEEASSV…PIVGQAEETV (293 aa)). Residues 310-323 (EASSVSQADKSVLS) show a composition bias toward polar residues. A 2; approximate repeat occupies 322 to 329 (LSQAEEAT). A 3; approximate repeat occupies 330-337 (VGHTEEAT). One copy of the 4; approximate repeat lies at 350–357 (LSQAEEAT). One copy of the 5; approximate repeat lies at 358 to 365 (VAQAKETV). One copy of the 6; approximate repeat lies at 366–373 (LSQAEEVK). One copy of the 7; approximate repeat lies at 398-405 (VSQAEEAI). An 8; approximate repeat occupies 414–421 (MGQAEEAT). Tandem repeats lie at residues 430–437 (VGQAEEAT), 438–445 (VGQAEEAT), 446–453 (VGQAEEAT), 454–461 (VGQAEEAT), and 462–469 (VGQAEEAT). A 14; approximate repeat occupies 470 to 477 (VGQAGEAT). The 15; approximate repeat unit spans residues 486 to 493 (VGQAEEAI). 4 consecutive repeat copies span residues 494–501 (VGQAEEAT), 502–509 (VGQAEEAT), 510–517 (VGQAEEAT), and 518–525 (VGQAEEAT). The stretch at 526-533 (VDQAEEAT) is one 20; approximate repeat. Repeat 21 spans residues 534 to 541 (VGQAEEAT). One copy of the 22; approximate repeat lies at 542-549 (VGQAGEAA). One copy of the 23; approximate repeat lies at 550-557 (VGQAEEAI). Residues 558–565 (VAQAEEAT) form a 24; approximate repeat. Repeat unit 25 spans residues 566–573 (VGQAGEAT). A 26; approximate repeat occupies 574–581 (VGQAEKAT). A 27; approximate repeat occupies 582-589 (VGQAEEPI). The stretch at 590 to 597 (VGQAEETV) is one 28; approximate repeat. Residues 675 to 696 (YETLLIETASSLVKNAIELSVE) are RII-beta subunit binding domain. Positions 697 to 714 (QLVNEMVSEDNQINTLFQ) are tethers NFATC2 to CRAC channels.

In terms of assembly, binding protein for dimer of the RII-beta regulatory subunit of cAMP-dependent protein kinase (PKA) and also for the protein kinase C (PKC) and the phosphatase calcineurin (PP2B). Each enzyme is inhibited when bound to the anchoring protein. Also binds the beta2-adrenergic receptor. Part of a complex containing AKAP5, ADCY5, ADCY6 and PDE4C. Interacts with ADCY8, and enhances its phosphorylation at lipid rafts. Interacts with ORAI1 (isoform alpha) (via N-terminus) upon store depletion and in response to LTC4. Does not interact with ORAI2 and ORAI3 paralogs. Interacts (via leucine zipper domain) with NFATC2/NFAT1. Interacts with calmodulin; the interaction is calcium-independent. Interacts with KCNQ2; the interaction may help KCNQ2 channel complex to retain calcium-bound calmodulin. Interacts with KCNK2; the channel is recruited to postsynaptic microdomains by AKAP5 where it can integrate neurotransmitter receptor signals. Part of a complex composed of AKAP5 and ADRB2. Palmitoylated. Palmitoylation at Cys-36 and Cys-123 plays a key role in the targeting of AKAP5 to lipid rafts. Palmitoylation by ZDHHC2 is required for AKAP5 function in LTP-stimulated recycling endosome exocytosis.

The protein resides in the postsynaptic recycling endosome membrane. It is found in the cell projection. It localises to the dendrite. The protein localises to the postsynaptic cell membrane. Its function is as follows. Multivalent scaffold protein that anchors the cAMP-dependent protein kinase/PKA to cytoskeletal and/or organelle-associated proteins, targeting the signal carried by cAMP to specific intracellular effectors. Association with the beta2-adrenergic receptor (beta2-AR) not only regulates beta2-AR signaling pathway, but also the activation by PKA by switching off the beta2-AR signaling cascade. Plays a role in long term synaptic potentiation by regulating protein trafficking from the dendritic recycling endosomes to the plasma membrane and controlling both structural and functional plasticity at excitatory synapses. In hippocampal pyramidal neurons, recruits KCNK2/TREK-1 channel at postsynaptic dense bodies microdomains and converts it to a leak channel no longer sensitive to stimulation by arachidonic acid, acidic pH or mechanical stress, nor inhibited by Gq-coupled receptors but still under the negative control of Gs-coupled receptors. Associates with ORAI1 pore-forming subunit of CRAC channels in Ca(2+) signaling microdomains where it recruits NFATC2/NFAT1 and couples store-operated Ca(2+) influx to calmodulin and calcineurin signaling and activation of NFAT-dependent transcriptional responses. This is A-kinase anchor protein 5 (Akap5) from Rattus norvegicus (Rat).